The sequence spans 244 residues: Pyridoxine 5'-phosphate synthase (244 aa).

N7 contributes to the 3-amino-2-oxopropyl phosphate binding site. 9–10 serves as a coordination point for 1-deoxy-D-xylulose 5-phosphate; sequence DH. A 3-amino-2-oxopropyl phosphate-binding site is contributed by R18. The active-site Proton acceptor is H43. 2 residues coordinate 1-deoxy-D-xylulose 5-phosphate: R45 and H50. The Proton acceptor role is filled by E70. T100 contacts 1-deoxy-D-xylulose 5-phosphate. H191 serves as the catalytic Proton donor. Residues G192 and 213–214 each bind 3-amino-2-oxopropyl phosphate; that span reads GH.

This sequence belongs to the PNP synthase family. Homooctamer; tetramer of dimers.

The protein localises to the cytoplasm. The catalysed reaction is 3-amino-2-oxopropyl phosphate + 1-deoxy-D-xylulose 5-phosphate = pyridoxine 5'-phosphate + phosphate + 2 H2O + H(+). Its pathway is cofactor biosynthesis; pyridoxine 5'-phosphate biosynthesis; pyridoxine 5'-phosphate from D-erythrose 4-phosphate: step 5/5. In terms of biological role, catalyzes the complicated ring closure reaction between the two acyclic compounds 1-deoxy-D-xylulose-5-phosphate (DXP) and 3-amino-2-oxopropyl phosphate (1-amino-acetone-3-phosphate or AAP) to form pyridoxine 5'-phosphate (PNP) and inorganic phosphate. The protein is Pyridoxine 5'-phosphate synthase of Laribacter hongkongensis (strain HLHK9).